Consider the following 135-residue polypeptide: Small ribosomal subunit protein bS18 (135 aa).

Residues 1-65 form a disordered region; it reads MARPDMGGPK…GDEGGGRRGF (65 aa). Residues 9–41 are compositionally biased toward gly residues; sequence PKMGGGFGGPRSGGFGGGGGGGGFGGGGFGGGR. Positions 42-61 are enriched in basic and acidic residues; that stretch reads GGDRGDRGDRDDRGGDEGGG.

Belongs to the bacterial ribosomal protein bS18 family. Part of the 30S ribosomal subunit. Forms a tight heterodimer with protein bS6.

In terms of biological role, binds as a heterodimer with protein bS6 to the central domain of the 16S rRNA, where it helps stabilize the platform of the 30S subunit. This Anaeromyxobacter dehalogenans (strain 2CP-C) protein is Small ribosomal subunit protein bS18.